The sequence spans 173 residues: C-phycocyanin-3 beta subunit (173 aa).

Position 73 is an N4-methylasparagine (N73). (2R,3E)-phycocyanobilin is bound by residues C83 and C154.

This sequence belongs to the phycobiliprotein family. Heterodimer of an alpha and a beta subunit, which further assembles into trimers and the trimers into hexamers. Contains two covalently linked bilin chromophores.

The protein localises to the cellular thylakoid membrane. Functionally, light-harvesting photosynthetic bile pigment-protein from the phycobiliprotein complex (phycobilisome, PBS). Phycocyanin is the major phycobiliprotein in the PBS rod. This is C-phycocyanin-3 beta subunit (cpcB3) from Microchaete diplosiphon (Fremyella diplosiphon).